Consider the following 799-residue polypeptide: 1,4-alpha-glucan-branching enzyme 2, chloroplastic/amyloplastic (799 aa).

Residues 1–57 (MAFRVSGAVLGGAVRAPRLTGGGEGSLVFRHTGLFLTRGARVGCSGTHGAMRAAAAA) constitute a chloroplast transit peptide. The (1,4-alpha-D-glucosyl)n site is built by W196 and K232. The active-site Nucleophile is the D447. E502 acts as the Proton donor in catalysis.

Belongs to the glycosyl hydrolase 13 family. GlgB subfamily. Monomer.

Its subcellular location is the plastid. The protein localises to the chloroplast. It is found in the amyloplast. The catalysed reaction is Transfers a segment of a (1-&gt;4)-alpha-D-glucan chain to a primary hydroxy group in a similar glucan chain.. Its pathway is glycan biosynthesis; starch biosynthesis. Catalyzes the formation of the alpha-1,6-glucosidic linkages in starch by scission of a 1,4-alpha-linked oligosaccharide from growing alpha-1,4-glucan chains and the subsequent attachment of the oligosaccharide to the alpha-1,6 position. The polypeptide is 1,4-alpha-glucan-branching enzyme 2, chloroplastic/amyloplastic (SBE1) (Zea mays (Maize)).